The primary structure comprises 271 residues: Dihydropteroate synthase type-2 (271 aa).

In terms of domain architecture, Pterin-binding spans 1–259 (MNKSLIIFGI…EPRPLRDGLA (259 aa)). N12 is a binding site for 4-aminobenzoate. Positions 12, 18, 51, and 52 each coordinate diphosphate. N12 is a binding site for Mg(2+). Residues S52, D85, N104, D174, F179, K213, and S214 each coordinate 7,8-dihydropteroate. Residues D85, N104, and D174 each coordinate (7,8-dihydropterin-6-yl)methyl diphosphate. Residues N104 and D174 each contribute to the 6-hydroxymethyl-7,8-dihydropterin site. Residue K213 participates in (7,8-dihydropterin-6-yl)methyl diphosphate binding. Position 213 (K213) interacts with 6-hydroxymethyl-7,8-dihydropterin. 4-aminobenzoate is bound at residue R247. Diphosphate is bound by residues R247 and H249. (7,8-dihydropterin-6-yl)methyl diphosphate is bound at residue 247 to 249 (RTH).

It belongs to the DHPS family. As to quaternary structure, homodimer. It depends on Mg(2+) as a cofactor.

The catalysed reaction is (7,8-dihydropterin-6-yl)methyl diphosphate + 4-aminobenzoate = 7,8-dihydropteroate + diphosphate. Its pathway is cofactor biosynthesis; tetrahydrofolate biosynthesis; 7,8-dihydrofolate from 2-amino-4-hydroxy-6-hydroxymethyl-7,8-dihydropteridine diphosphate and 4-aminobenzoate: step 1/2. In terms of biological role, catalyzes the condensation of para-aminobenzoate (pABA) with 6-hydroxymethyl-7,8-dihydropterin diphosphate (DHPt-PP) to form 7,8-dihydropteroate (H2Pte), the immediate precursor of folate derivatives. Confers resistance to sulfonamide antibiotics, including sulfamethoxazole (SMX), sulfadiazine and sulfisoxazole. The type II enzyme is stable whereas type I DHPS loses its activity rapidly. In Escherichia coli, this protein is Dihydropteroate synthase type-2.